We begin with the raw amino-acid sequence, 411 residues long: Anaerobic nitric oxide reductase flavorubredoxin homolog (411 aa).

The tract at residues 30–210 is zinc metallo-hydrolase; that stretch reads LRGSSYNSYL…PFSRLVTPKI (181 aa). The Fe cation site is built by H79, E81, D83, H147, D166, H227, C360, C363, C393, and C396. A Rubredoxin-like domain is found at 355 to 406; the sequence is GPRMQCSVCQWIYDPAKGEPMQDVAPGTPWSEVPDNFLCPECSLGKDVFDEL.

In the N-terminal section; belongs to the zinc metallo-hydrolase group 3 family. In terms of assembly, homotetramer. Fe cation serves as cofactor.

The protein resides in the cytoplasm. The protein operates within nitrogen metabolism; nitric oxide reduction. In terms of biological role, anaerobic nitric oxide reductase; uses NADH to detoxify nitric oxide (NO), protecting several 4Fe-4S NO-sensitive enzymes. Has at least 2 reductase partners, only one of which (NorW, flavorubredoxin reductase) has been identified. NO probably binds to the di-iron center. Also able to function as an aerobic oxygen reductase. This chain is Anaerobic nitric oxide reductase flavorubredoxin homolog, found in Escherichia coli O157:H7.